The sequence spans 87 residues: Small ribosomal subunit protein bS20 (87 aa).

Positions 67–87 are disordered; that stretch reads HKNNGSRKASRLDAYVQSKQQ.

This sequence belongs to the bacterial ribosomal protein bS20 family.

Functionally, binds directly to 16S ribosomal RNA. The polypeptide is Small ribosomal subunit protein bS20 (Metamycoplasma arthritidis (strain 158L3-1) (Mycoplasma arthritidis)).